The primary structure comprises 330 residues: Phosphate acyltransferase (330 aa).

Belongs to the PlsX family. As to quaternary structure, homodimer. Probably interacts with PlsY.

The protein localises to the cytoplasm. The catalysed reaction is a fatty acyl-[ACP] + phosphate = an acyl phosphate + holo-[ACP]. The protein operates within lipid metabolism; phospholipid metabolism. Its function is as follows. Catalyzes the reversible formation of acyl-phosphate (acyl-PO(4)) from acyl-[acyl-carrier-protein] (acyl-ACP). This enzyme utilizes acyl-ACP as fatty acyl donor, but not acyl-CoA. The polypeptide is Phosphate acyltransferase (Lysinibacillus sphaericus (strain C3-41)).